The chain runs to 180 residues: Sec-independent protein translocase protein TatB (180 aa).

The helical transmembrane segment at 1–21 (MFDIGWSELLVIGVVALIAIG) threads the bilayer. Residues 95-180 (IEGVDKPVES…AERLKDAKAS (86 aa)) are disordered. Residues 103–123 (ESQPAASAAPETSATVEAPAT) show a composition bias toward low complexity. Residues 170-180 (EAERLKDAKAS) show a composition bias toward basic and acidic residues.

The protein belongs to the TatB family. The Tat system comprises two distinct complexes: a TatABC complex, containing multiple copies of TatA, TatB and TatC subunits, and a separate TatA complex, containing only TatA subunits. Substrates initially bind to the TatABC complex, which probably triggers association of the separate TatA complex to form the active translocon.

The protein resides in the cell inner membrane. Its function is as follows. Part of the twin-arginine translocation (Tat) system that transports large folded proteins containing a characteristic twin-arginine motif in their signal peptide across membranes. Together with TatC, TatB is part of a receptor directly interacting with Tat signal peptides. TatB may form an oligomeric binding site that transiently accommodates folded Tat precursor proteins before their translocation. This is Sec-independent protein translocase protein TatB from Bradyrhizobium sp. (strain BTAi1 / ATCC BAA-1182).